An 80-amino-acid polypeptide reads, in one-letter code: Putative membrane protein insertion efficiency factor (80 aa).

The interval 61-80 is disordered; the sequence is KTGKDPVPDHFSLKRNQEGE. Over residues 62–80 the composition is skewed to basic and acidic residues; the sequence is TGKDPVPDHFSLKRNQEGE.

Belongs to the UPF0161 family.

It localises to the cell membrane. Could be involved in insertion of integral membrane proteins into the membrane. This Streptococcus pneumoniae serotype 19F (strain G54) protein is Putative membrane protein insertion efficiency factor.